The primary structure comprises 625 residues: Cysteine-rich receptor-like protein kinase 46 (625 aa).

Positions 1–23 are cleaved as a signal peptide; sequence MASTLISSLAVVLPLTLLAPSMS. Residues 24–252 lie on the Extracellular side of the membrane; the sequence is MKISRIDVLG…LLAMSFTKEN (229 aa). Gnk2-homologous domains follow at residues 29-130 and 135-237; these read IDVL…NYSF and VSHQ…NYTF. N-linked (GlcNAc...) asparagine glycosylation is found at asparagine 38, asparagine 127, asparagine 234, and asparagine 252. A helical transmembrane segment spans residues 253–273; sequence LTYIFVISMVGVLAIAAGFWC. Residues 274–625 are Cytoplasmic-facing; the sequence is GKCFYMRTSP…TKPPFLHDSM (352 aa). Positions 331-621 constitute a Protein kinase domain; it reads FNESCKLGVG…LPTPTKPPFL (291 aa). Residues 337 to 345 and lysine 359 contribute to the ATP site; that span reads LGVGGYGEV. A Phosphotyrosine modification is found at tyrosine 404. Aspartate 454 (proton acceptor) is an active-site residue. The residue at position 458 (serine 458) is a Phosphoserine. A Phosphothreonine modification is found at threonine 499. Residue tyrosine 507 is modified to Phosphotyrosine.

Belongs to the protein kinase superfamily. Ser/Thr protein kinase family. CRK subfamily.

Its subcellular location is the membrane. It catalyses the reaction L-seryl-[protein] + ATP = O-phospho-L-seryl-[protein] + ADP + H(+). The catalysed reaction is L-threonyl-[protein] + ATP = O-phospho-L-threonyl-[protein] + ADP + H(+). In Arabidopsis thaliana (Mouse-ear cress), this protein is Cysteine-rich receptor-like protein kinase 46.